A 145-amino-acid polypeptide reads, in one-letter code: 3-hydroxyacyl-[acyl-carrier-protein] dehydratase FabZ (145 aa).

His49 is a catalytic residue.

It belongs to the thioester dehydratase family. FabZ subfamily.

Its subcellular location is the cytoplasm. It catalyses the reaction a (3R)-hydroxyacyl-[ACP] = a (2E)-enoyl-[ACP] + H2O. Its function is as follows. Involved in unsaturated fatty acids biosynthesis. Catalyzes the dehydration of short chain beta-hydroxyacyl-ACPs and long chain saturated and unsaturated beta-hydroxyacyl-ACPs. In Ehrlichia ruminantium (strain Welgevonden), this protein is 3-hydroxyacyl-[acyl-carrier-protein] dehydratase FabZ.